The following is a 192-amino-acid chain: UPF0149 protein KPN78578_32810 (192 aa).

This sequence belongs to the UPF0149 family.

This is UPF0149 protein KPN78578_32810 from Klebsiella pneumoniae subsp. pneumoniae (strain ATCC 700721 / MGH 78578).